Consider the following 825-residue polypeptide: Probable phosphoketolase (825 aa).

Belongs to the XFP family. The cofactor is thiamine diphosphate.

In Bifidobacterium animalis subsp. lactis (strain AD011), this protein is Probable phosphoketolase.